The sequence spans 141 residues: HTH-type transcriptional regulator MntR (141 aa).

In terms of domain architecture, HTH dtxR-type spans 1 to 63 (MPTPSMEDYI…YEKYRGLVLT (63 aa)). Mn(2+) is bound by residues Asp-8, Glu-11, His-77, Glu-99, Glu-102, and His-103.

This sequence belongs to the DtxR/MntR family. As to quaternary structure, homodimer.

The protein localises to the cytoplasm. DNA binding is strongly activated by Mn(2+). Functionally, central regulator of manganese homeostasis. This Geobacillus kaustophilus (strain HTA426) protein is HTH-type transcriptional regulator MntR.